Consider the following 85-residue polypeptide: MRGLLIILIKFYKKFISPVLPKSCRFYPTCSTYALEAIERFGAFEGGILAIKRILRCHPFNPGGYDPVPTKEEFLELKLKRRKNK.

Belongs to the UPF0161 family.

Its subcellular location is the cell inner membrane. In terms of biological role, could be involved in insertion of integral membrane proteins into the membrane. In Dictyoglomus thermophilum (strain ATCC 35947 / DSM 3960 / H-6-12), this protein is Putative membrane protein insertion efficiency factor.